Consider the following 210-residue polypeptide: Ribonuclease HII (210 aa).

The region spanning Arg18–Thr207 is the RNase H type-2 domain. 3 residues coordinate a divalent metal cation: Asp24, Glu25, and Asp115.

This sequence belongs to the RNase HII family. It depends on Mn(2+) as a cofactor. Mg(2+) serves as cofactor.

The protein localises to the cytoplasm. It carries out the reaction Endonucleolytic cleavage to 5'-phosphomonoester.. Endonuclease that specifically degrades the RNA of RNA-DNA hybrids. The polypeptide is Ribonuclease HII (Paracoccus denitrificans (strain Pd 1222)).